Consider the following 200-residue polypeptide: NAD(P)H dehydrogenase (quinone) (200 aa).

The region spanning L7–L199 is the Flavodoxin-like domain. Residues S13–G18, T86–F88, S121–G127, and H142 contribute to the FMN site.

It belongs to the WrbA family. In terms of assembly, homotetramer. It depends on FMN as a cofactor.

The catalysed reaction is a quinone + NADH + H(+) = a quinol + NAD(+). It catalyses the reaction a quinone + NADPH + H(+) = a quinol + NADP(+). The chain is NAD(P)H dehydrogenase (quinone) from Deinococcus radiodurans (strain ATCC 13939 / DSM 20539 / JCM 16871 / CCUG 27074 / LMG 4051 / NBRC 15346 / NCIMB 9279 / VKM B-1422 / R1).